The following is a 651-amino-acid chain: Gag-Pro polyprotein (651 aa).

G2 is lipidated: N-myristoyl glycine; by host. A disordered region spans residues 93-143 (QIPSHPAPPPPSSPTHDPPDSDPQIPPPYVEPTAPQVLPVMHPHGVPPTHR). S105 bears the Phosphoserine; by host MAPK1 mark. Residues 118–121 (PPPY) carry the PPXY motif motif. The short motif at 124-127 (PTAP) is the PTAP/PSAP motif element. CCHC-type zinc fingers lie at residues 355-372 (QPCF…DCAQ) and 378-395 (GPCP…DCPR). The Peptidase A2 domain maps to 476-554 (IEALLDTGAD…NNWAIIGRDA (79 aa)). D481 serves as the catalytic For protease activity; shared with dimeric partner. The disordered stretch occupies residues 632–651 (QLKRPMEPGDSSTTCGPLIL). Polar residues predominate over residues 641 to 651 (DSSTTCGPLIL).

In terms of assembly, homodimer; the homodimers are part of the immature particles. Interacts with human TSG101 and NEDD4; these interactions are essential for budding and release of viral particles. As to quaternary structure, homodimer; further assembles as homohexamers. Specific enzymatic cleavages by the viral protease yield mature proteins. The polyprotein is cleaved during and after budding, this process is termed maturation. The protease is autoproteolytically processed at its N- and C-termini. In terms of processing, phosphorylation of the matrix protein p19 by MAPK1 seems to play a role in budding. Post-translationally, myristoylated. Myristoylation of the matrix (MA) domain mediates the transport and binding of Gag polyproteins to the host plasma membrane and is required for the assembly of viral particles.

It localises to the virion. The matrix domain targets Gag, Gag-Pro and Gag-Pro-Pol polyproteins to the plasma membrane via a multipartite membrane binding signal, that includes its myristoylated N-terminus. Its function is as follows. Matrix protein. Functionally, forms the spherical core of the virus that encapsulates the genomic RNA-nucleocapsid complex. In terms of biological role, binds strongly to viral nucleic acids and promote their aggregation. Also destabilizes the nucleic acids duplexes via highly structured zinc-binding motifs. The aspartyl protease mediates proteolytic cleavages of Gag and Gag-Pol polyproteins during or shortly after the release of the virion from the plasma membrane. Cleavages take place as an ordered, step-wise cascade to yield mature proteins. This process is called maturation. Displays maximal activity during the budding process just prior to particle release from the cell (Potential). Cleaves the translation initiation factor eIF4G leading to the inhibition of host cap-dependent translation. This is Gag-Pro polyprotein (gag-pro) from Human T-cell leukemia virus 1 (isolate Melanesia mel5 subtype C) (HTLV-1).